Here is a 290-residue protein sequence, read N- to C-terminus: DKKEPDMFLLSECKAPEENEKINLGCLVIGSQPLKISWEPKKSSIVEHVFPSEMRNGNYTMVLQVTVLASELNLNHTCTINKPKRKEKPFKFPESWDSQSSKRVTPTLQAKNHSTEATKAITTKKDIEGAMAPSNLTVNILTTSTHPEMSSWLLCEVSGFFPENIHLMWLGVHSKMKSTNFVTANPTAQPGGTFQTWSVLRLPVALSSSLDTYTCVVEHEASKTKLNASKSLAISGIVNTIQHSCIMDEQSDSYMDLEEENGLWPTMCTFVALFLLTLLYSGFVTFIKVK.

The region spanning 5–105 (PDMFLLSECK…WDSQSSKRVT (101 aa)) is the Ig-like 1 domain. A disulfide bridge connects residues cysteine 26 and cysteine 78. N-linked (GlcNAc...) asparagine glycans are attached at residues asparagine 58 and asparagine 75. The segment at 89–111 (PFKFPESWDSQSSKRVTPTLQAK) is disordered. Residues 96–111 (WDSQSSKRVTPTLQAK) are compositionally biased toward polar residues. Residues asparagine 112, asparagine 135, and asparagine 227 are each glycosylated (N-linked (GlcNAc...) asparagine). Positions 133 to 233 (PSNLTVNILT…TKLNASKSLA (101 aa)) constitute an Ig-like 2 domain. A helical transmembrane segment spans residues 262-279 (GLWPTMCTFVALFLLTLL). The Cytoplasmic portion of the chain corresponds to 280–290 (YSGFVTFIKVK).

Cell lines producing IgD contain several mRNA species for Ig delta chains. In plasmacytomas, the secreted form is the major component, and the membrane-bound form is a minor component. In spleen, however, the membrane-bound form is the major component. These two forms differ in their C-terminal segments.

The protein resides in the cell membrane. In Mus musculus (Mouse), this protein is Ig delta chain C region membrane-bound form.